The sequence spans 433 residues: tRNA-2-methylthio-N(6)-dimethylallyladenosine synthase (433 aa).

The region spanning K3–F118 is the MTTase N-terminal domain. [4Fe-4S] cluster-binding residues include C12, C49, C81, C150, C154, and C157. One can recognise a Radical SAM core domain in the interval R136 to E369. Residues A372 to I433 form the TRAM domain.

This sequence belongs to the methylthiotransferase family. MiaB subfamily. As to quaternary structure, monomer. [4Fe-4S] cluster serves as cofactor.

It localises to the cytoplasm. It catalyses the reaction N(6)-dimethylallyladenosine(37) in tRNA + (sulfur carrier)-SH + AH2 + 2 S-adenosyl-L-methionine = 2-methylsulfanyl-N(6)-dimethylallyladenosine(37) in tRNA + (sulfur carrier)-H + 5'-deoxyadenosine + L-methionine + A + S-adenosyl-L-homocysteine + 2 H(+). In terms of biological role, catalyzes the methylthiolation of N6-(dimethylallyl)adenosine (i(6)A), leading to the formation of 2-methylthio-N6-(dimethylallyl)adenosine (ms(2)i(6)A) at position 37 in tRNAs that read codons beginning with uridine. The polypeptide is tRNA-2-methylthio-N(6)-dimethylallyladenosine synthase (Campylobacter concisus (strain 13826)).